Consider the following 170-residue polypeptide: Ribosome maturation factor RimM (170 aa).

The PRC barrel domain occupies Glu-98–Phe-170.

Belongs to the RimM family. As to quaternary structure, binds ribosomal protein uS19.

Its subcellular location is the cytoplasm. Functionally, an accessory protein needed during the final step in the assembly of 30S ribosomal subunit, possibly for assembly of the head region. Essential for efficient processing of 16S rRNA. May be needed both before and after RbfA during the maturation of 16S rRNA. It has affinity for free ribosomal 30S subunits but not for 70S ribosomes. The chain is Ribosome maturation factor RimM from Alkalilimnicola ehrlichii (strain ATCC BAA-1101 / DSM 17681 / MLHE-1).